The primary structure comprises 308 residues: ADP-L-glycero-D-manno-heptose-6-epimerase (308 aa).

Residues 10-11, 31-32, Lys38, Lys53, 75-79, and Asn92 contribute to the NADP(+) site; these read MI, DN, and EGACS. Tyr140 acts as the Proton acceptor in catalysis. Lys144 is a binding site for NADP(+). Position 169 (Asn169) interacts with substrate. Residues Val170 and Lys178 each contribute to the NADP(+) site. Lys178 serves as the catalytic Proton acceptor. Substrate is bound by residues Ser180, His187, 201 to 204, Arg209, and Tyr272; that span reads FEGS.

Belongs to the NAD(P)-dependent epimerase/dehydratase family. HldD subfamily. As to quaternary structure, homopentamer. NADP(+) is required as a cofactor.

It carries out the reaction ADP-D-glycero-beta-D-manno-heptose = ADP-L-glycero-beta-D-manno-heptose. It participates in nucleotide-sugar biosynthesis; ADP-L-glycero-beta-D-manno-heptose biosynthesis; ADP-L-glycero-beta-D-manno-heptose from D-glycero-beta-D-manno-heptose 7-phosphate: step 4/4. Functionally, catalyzes the interconversion between ADP-D-glycero-beta-D-manno-heptose and ADP-L-glycero-beta-D-manno-heptose via an epimerization at carbon 6 of the heptose. The polypeptide is ADP-L-glycero-D-manno-heptose-6-epimerase (Actinobacillus pleuropneumoniae serotype 5b (strain L20)).